The following is a 439-amino-acid chain: Xylose isomerase (439 aa).

Active-site residues include histidine 101 and aspartate 104. Positions 232, 268, 271, 296, 307, 309, and 339 each coordinate Mg(2+).

Belongs to the xylose isomerase family. As to quaternary structure, homotetramer. Requires Mg(2+) as cofactor.

It is found in the cytoplasm. It catalyses the reaction alpha-D-xylose = alpha-D-xylulofuranose. In Lactococcus lactis subsp. lactis (strain IL1403) (Streptococcus lactis), this protein is Xylose isomerase (xylA).